Here is a 232-residue protein sequence, read N- to C-terminus: MPFIFRYSFFNKALIFWYTILMKIYKTINHIAGENTYYLVNDQAVILIDPGSNGQEIISKIKSFEKPLVAILLTHTHYDHIFSLDLVRDAFDHPPVYVSEKEAAWLSSPDDNLSGLGRHDDIINVIARPAENFFKLKQPYQLNGFEFTVLPTPGHSWGGVSFVFHSDELVVTGDALFRETIGRTDLPTSNFEDLITGIRQELFTLPNHYRVYPGHGPSTTICHEKNANPFFH.

His-75, His-77, Asp-79, His-80, His-155, Asp-174, and His-215 together coordinate Zn(2+).

Zn(2+) is required as a cofactor.

This is Probable metallo-hydrolase M6_Spy0554 from Streptococcus pyogenes serotype M6 (strain ATCC BAA-946 / MGAS10394).